A 374-amino-acid chain; its full sequence is MAPNNVDNPQNCVVNNTINGGVGVDDEETYGYAAQVLNSCVLPMVLNATIELGVLHLVNQAGSGPDGLSPAQLAALIQARNPDASVMLDRMLRVLATYDVVSCTAVPTEDGGFERRYGPAPVTKCFVPDEDGVSLAPMLNLVIDKVFLQSWSKLKEAVMEGGIPFNKVHGMHAFEYPAVDPRFNEIFNKAMYDQSTHIIKNILAKYKGFSQIQQLVDVGGGLGHTLRVITSKYPSIKGINFDLPHVVEHAPQIPGVEHVGGDMFESVPKGDAIFMKWILHDWSDDKCLTLLKNCYKALPENGMVIAVETNITDQPETTAYARAISQLDVSMMTQNPGGKERTRREFESLAKSAGFARVDFVCCASSFWVMEFHK.

Ser195, Gly219, Asp242, Asp262, and Lys276 together coordinate S-adenosyl-L-homocysteine. Residue Asp242 participates in S-adenosyl-L-methionine binding. His280 serves as the catalytic Proton acceptor.

Belongs to the class I-like SAM-binding methyltransferase superfamily. Cation-independent O-methyltransferase family. In terms of assembly, homodimer. Expressed mainly in vasculature and cortex tissues at low levels.

The enzyme catalyses dopamine + S-adenosyl-L-methionine = 4-methoxytyramine + S-adenosyl-L-homocysteine + H(+). It participates in aromatic compound metabolism. It functions in the pathway alkaloid biosynthesis. In terms of biological role, O-methyltransferase participating in the biosynthesis of natural products derived from phenylethylamine, including mescaline, a natural hallucinogen potentially used in psychotherapeutic treatments. Catalyzes the O-methylation of dopamine to produce 4-methoxytyramine. The chain is O-methyltransferase 16 from Lophophora williamsii (Peyote).